A 284-amino-acid polypeptide reads, in one-letter code: Nucleotide-binding protein Sbal195_0713 (284 aa).

8 to 15 (GRSGSGKS) contributes to the ATP binding site. 56 to 59 (DVRN) is a GTP binding site.

This sequence belongs to the RapZ-like family.

In terms of biological role, displays ATPase and GTPase activities. The polypeptide is Nucleotide-binding protein Sbal195_0713 (Shewanella baltica (strain OS195)).